The primary structure comprises 54 residues: uncharacterized protein (54 aa).

Residues 6 to 26 (ILIYLLIFVAGIVIGKIRINV) form a helical membrane-spanning segment.

It localises to the host membrane. This is an uncharacterized protein from Acidianus convivator (ABV).